The sequence spans 216 residues: ATP synthase subunit a (216 aa).

Helical transmembrane passes span 1-21, 62-82, 88-108, 119-139, 149-169, 174-194, and 196-216; these read MEYSHVVYALLAVALAIIFVL, LIAAIGLFVFFGNILGMVPGF, NINTNLALALLVFFYYHFEGF, FMGPIPLMAPFFFVVEVISHI, LFANMKAGALLLLTLVSLVIK, LVVSPVVLIFVIAIKFLAIFI, and TYIFMILSVVYIAGAVAHEEH.

Belongs to the ATPase A chain family. In terms of assembly, F-type ATPases have 2 components, CF(1) - the catalytic core - and CF(0) - the membrane proton channel. CF(1) has five subunits: alpha(3), beta(3), gamma(1), delta(1), epsilon(1). CF(0) has three main subunits: a(1), b(2) and c(9-12). The alpha and beta chains form an alternating ring which encloses part of the gamma chain. CF(1) is attached to CF(0) by a central stalk formed by the gamma and epsilon chains, while a peripheral stalk is formed by the delta and b chains.

Its subcellular location is the cell inner membrane. In terms of biological role, key component of the proton channel; it plays a direct role in the translocation of protons across the membrane. The chain is ATP synthase subunit a from Aquifex aeolicus (strain VF5).